The sequence spans 335 residues: Antigen-presenting glycoprotein CD1d (335 aa).

An N-terminal signal peptide occupies residues 1-19 (MGCLLFLLLWALLQAWGSA). Residues 20 to 301 (EVPQRLFPLR…VLYWGGSYTS (282 aa)) are Extracellular-facing. Asn-38 and Asn-60 each carry an N-linked (GlcNAc...) asparagine glycan. A D-galactosylceramide is bound at residue Asp-98. Disulfide bonds link Cys-120–Cys-184 and Cys-224–Cys-279. N-linked (GlcNAc...) asparagine glycosylation is present at Asn-126. An a D-galactosylceramide-binding site is contributed by 169–172 (DKWT). N-linked (GlcNAc...) asparagine glycosylation is present at Asn-181. One can recognise an Ig-like domain in the interval 185–292 (PQFVSGLLES…HSSLEGQDIV (108 aa)). The chain crosses the membrane as a helical span at residues 302–322 (MGLIALAVLACLLFLLIVGFT). At 323 to 335 (SRFKRQTSYQGVL) the chain is on the cytoplasmic side. An Internalization signal motif is present at residues 331–334 (YQGV).

Heterodimer with B2M (beta-2-microglobulin). Interacts with MHC II. As to expression, expressed on cortical thymocytes, on certain T-cell leukemias, and in various other tissues.

The protein resides in the cell membrane. It is found in the basolateral cell membrane. The protein localises to the endosome membrane. Its subcellular location is the lysosome membrane. It localises to the endoplasmic reticulum membrane. In terms of biological role, antigen-presenting protein that binds self and non-self glycolipids and presents them to T-cell receptors on natural killer T-cells. This Homo sapiens (Human) protein is Antigen-presenting glycoprotein CD1d (CD1D).